Here is a 149-residue protein sequence, read N- to C-terminus: Arginine repressor (149 aa).

This sequence belongs to the ArgR family.

The protein resides in the cytoplasm. Its pathway is amino-acid biosynthesis; L-arginine biosynthesis [regulation]. Regulates arginine biosynthesis genes. The sequence is that of Arginine repressor from Bacillus pumilus (strain SAFR-032).